A 65-amino-acid chain; its full sequence is Large ribosomal subunit protein bL35 (65 aa).

Positions 1–20 (MPKMKTNSGSKKRFTLTGTG) are disordered.

Belongs to the bacterial ribosomal protein bL35 family.

The sequence is that of Large ribosomal subunit protein bL35 from Bacteroides thetaiotaomicron (strain ATCC 29148 / DSM 2079 / JCM 5827 / CCUG 10774 / NCTC 10582 / VPI-5482 / E50).